Here is a 292-residue protein sequence, read N- to C-terminus: Probable porphobilinogen deaminase (292 aa).

S-(dipyrrolylmethanemethyl)cysteine is present on Cys-233.

This sequence belongs to the HMBS family. Dipyrromethane is required as a cofactor.

The catalysed reaction is 4 porphobilinogen + H2O = hydroxymethylbilane + 4 NH4(+). Its pathway is porphyrin-containing compound metabolism; protoporphyrin-IX biosynthesis; coproporphyrinogen-III from 5-aminolevulinate: step 2/4. Its function is as follows. Tetrapolymerization of the monopyrrole PBG into the hydroxymethylbilane pre-uroporphyrinogen in several discrete steps. This chain is Probable porphobilinogen deaminase (hemC), found in Methanocaldococcus jannaschii (strain ATCC 43067 / DSM 2661 / JAL-1 / JCM 10045 / NBRC 100440) (Methanococcus jannaschii).